The chain runs to 117 residues: Large ribosomal subunit protein bL19 (117 aa).

This sequence belongs to the bacterial ribosomal protein bL19 family.

In terms of biological role, this protein is located at the 30S-50S ribosomal subunit interface and may play a role in the structure and function of the aminoacyl-tRNA binding site. The protein is Large ribosomal subunit protein bL19 of Exiguobacterium sp. (strain ATCC BAA-1283 / AT1b).